The primary structure comprises 214 residues: Transcription factor MYB24 (214 aa).

HTH myb-type domains are found at residues 14-66 (DAEV…LNYL) and 67-121 (RPDV…QKYI). 2 consecutive DNA-binding regions (H-T-H motif) follow at residues 42–66 (WNSL…LNYL) and 94–117 (WSKI…RTKI).

In terms of assembly, interacts (via N-terminus) with TIFY10A/JAZ1, TIFY5A/JAZ8 AND TIFY3A/JAZ11. In terms of tissue distribution, expressed specifically in flowers. Expressed in all four whorls of the flower and in the vascular tissue of stamen filament and sepals. Detected in male and female gametophytes, especially in microspores and ovules. Weakly expressed in petals and the upper part of pistils.

It is found in the nucleus. In terms of biological role, transcription factor acting redundantly with MYB21 and MYB57 to control stamen filament elongation in the late developed flowers. Contributes with MYB21 to induction of MYB108 by jasmonate. Repressed at the transcript levels by DELLA proteins. The sequence is that of Transcription factor MYB24 (MYB24) from Arabidopsis thaliana (Mouse-ear cress).